The chain runs to 412 residues: Serine hydroxymethyltransferase (412 aa).

(6S)-5,6,7,8-tetrahydrofolate-binding positions include L117 and 121–123 (GHL). Position 226 is an N6-(pyridoxal phosphate)lysine (K226). 349 to 351 (SPF) is a binding site for (6S)-5,6,7,8-tetrahydrofolate.

This sequence belongs to the SHMT family. In terms of assembly, homodimer. Pyridoxal 5'-phosphate is required as a cofactor.

The protein localises to the cytoplasm. It carries out the reaction (6R)-5,10-methylene-5,6,7,8-tetrahydrofolate + glycine + H2O = (6S)-5,6,7,8-tetrahydrofolate + L-serine. Its pathway is one-carbon metabolism; tetrahydrofolate interconversion. It functions in the pathway amino-acid biosynthesis; glycine biosynthesis; glycine from L-serine: step 1/1. Functionally, catalyzes the reversible interconversion of serine and glycine with tetrahydrofolate (THF) serving as the one-carbon carrier. This reaction serves as the major source of one-carbon groups required for the biosynthesis of purines, thymidylate, methionine, and other important biomolecules. Also exhibits THF-independent aldolase activity toward beta-hydroxyamino acids, producing glycine and aldehydes, via a retro-aldol mechanism. The protein is Serine hydroxymethyltransferase of Lawsonia intracellularis (strain PHE/MN1-00).